The following is an 89-amino-acid chain: Large ribosomal subunit protein bL27 (89 aa).

The segment at 1–21 (MAHKKAGGSSRNGRDSESKRL) is disordered.

It belongs to the bacterial ribosomal protein bL27 family.

The sequence is that of Large ribosomal subunit protein bL27 from Brucella anthropi (strain ATCC 49188 / DSM 6882 / CCUG 24695 / JCM 21032 / LMG 3331 / NBRC 15819 / NCTC 12168 / Alc 37) (Ochrobactrum anthropi).